Consider the following 150-residue polypeptide: Nitric oxide reductase subunit C (150 aa).

A helical; Signal-anchor transmembrane segment spans residues 13 to 29 (VFYGGSIFFILIFGALT). Heme c contacts are provided by C62, C65, and H66.

Heterodimer of cytochromes b (large subunit) and c (small subunit).

The protein resides in the cell membrane. Its function is as follows. Component of the anaerobic respiratory chain that transforms nitrate to dinitrogen (denitrification). This is Nitric oxide reductase subunit C (norC) from Paracoccus denitrificans.